We begin with the raw amino-acid sequence, 322 residues long: Germ cell-specific gene 1-like protein (322 aa).

The Cytoplasmic segment spans residues 1–8; that stretch reads MKTSRRGR. Residues 9–29 traverse the membrane as a helical segment; that stretch reads ALLAVALNLLALLFATTAFLT. Residues 30–122 lie on the Extracellular side of the membrane; the sequence is TYWCQGTQRV…FIDLAPASEK (93 aa). A helical membrane pass occupies residues 123–143; it reads GVLWLSVVSEVLYILLLVVGF. Topologically, residues 144 to 163 are cytoplasmic; that stretch reads SLMCLELLHSSSVIDGLKLN. Residues 164–184 form a helical membrane-spanning segment; that stretch reads AFAAVFTVLSGLLGMVAHMMY. At 185–207 the chain is on the extracellular side; that stretch reads TQVFQVTVSLGPEDWRPHSWDYG. The helical transmembrane segment at 208–228 threads the bilayer; the sequence is WSFCLAWGSFTCCMAASVTTL. Topologically, residues 229 to 322 are cytoplasmic; sequence NSYTKTVIEF…RQCWVLGHWV (94 aa). At serine 274 the chain carries Phosphoserine.

This sequence belongs to the GSG1 family. Component of the inner core of AMPAR complexes. AMPAR complexes consist of an inner core made of 4 pore-forming GluA/GRIA proteins (GRIA1, GRIA2, GRIA3 and GRIA4) and 4 major auxiliary subunits arranged in a twofold symmetry. One of the two pairs of distinct binding sites is occupied either by CNIH2, CNIH3 or CACNG2, CACNG3. The other harbors CACNG2, CACNG3, CACNG4, CACNG8 or GSG1L. This inner core of AMPAR complexes is complemented by outer core constituents binding directly to the GluA/GRIA proteins at sites distinct from the interaction sites of the inner core constituents. Outer core constituents include at least PRRT1, PRRT2, CKAMP44/SHISA9, FRRS1L and NRN1. The proteins of the inner and outer core serve as a platform for other, more peripherally associated AMPAR constituents. Alone or in combination, these auxiliary subunits control the gating and pharmacology of the AMPAR complexes and profoundly impact their biogenesis and protein processing. Expressed in the brain (at protein level).

Its subcellular location is the cell membrane. The protein resides in the synapse. In terms of biological role, as a component of the inner core of AMPAR complexes, modifies AMPA receptor (AMPAR) gating. This Rattus norvegicus (Rat) protein is Germ cell-specific gene 1-like protein (Gsg1l).